The chain runs to 493 residues: Chaperone SurA (493 aa).

An N-terminal signal peptide occupies residues Met-1–Ala-33. The disordered stretch occupies residues Phe-46–Pro-76. The segment covering Gln-48 to Ser-58 has biased composition (low complexity). PpiC domains follow at residues Pro-230–Ser-332 and Ile-346–Asn-444.

Its subcellular location is the periplasm. The enzyme catalyses [protein]-peptidylproline (omega=180) = [protein]-peptidylproline (omega=0). Functionally, chaperone involved in the correct folding and assembly of outer membrane proteins. Recognizes specific patterns of aromatic residues and the orientation of their side chains, which are found more frequently in integral outer membrane proteins. May act in both early periplasmic and late outer membrane-associated steps of protein maturation. This Cupriavidus metallidurans (strain ATCC 43123 / DSM 2839 / NBRC 102507 / CH34) (Ralstonia metallidurans) protein is Chaperone SurA.